A 600-amino-acid chain; its full sequence is Cytidine monophosphate-N-acetylneuraminic acid hydroxylase (600 aa).

The 99-residue stretch at 9 to 107 (LSPVEVASLK…VEMDENNRLL (99 aa)) folds into the Rieske domain. The [2Fe-2S] cluster site is built by Cys49, His51, Cys70, and His73.

It belongs to the CMP-Neu5Ac hydroxylase family. [2Fe-2S] cluster serves as cofactor.

The protein localises to the cytoplasm. It carries out the reaction CMP-N-acetyl-beta-neuraminate + 2 Fe(II)-[cytochrome b5] + O2 + 2 H(+) = CMP-N-glycoloyl-beta-neuraminate + 2 Fe(III)-[cytochrome b5] + H2O. Its pathway is amino-sugar metabolism; N-acetylneuraminate metabolism. Sialic acids are components of carbohydrate chains of glycoconjugates and are involved in cell-cell recognition and cell-pathogen interactions. Catalyzes the conversion of CMP-N-acetylneuraminic acid (CMP-Neu5Ac) into its hydroxylated derivative CMP-N-glycolylneuraminic acid (CMP-Neu5Gc), a sialic acid abundantly expressed at the surface of many cells. The chain is Cytidine monophosphate-N-acetylneuraminic acid hydroxylase (CMAH) from Gorilla gorilla gorilla (Western lowland gorilla).